The sequence spans 280 residues: Hydroxyethylthiazole kinase (280 aa).

M58 is a substrate binding site. R129 serves as a coordination point for ATP. A206 contacts substrate.

It belongs to the Thz kinase family. The cofactor is Mg(2+).

The catalysed reaction is 5-(2-hydroxyethyl)-4-methylthiazole + ATP = 4-methyl-5-(2-phosphooxyethyl)-thiazole + ADP + H(+). It participates in cofactor biosynthesis; thiamine diphosphate biosynthesis; 4-methyl-5-(2-phosphoethyl)-thiazole from 5-(2-hydroxyethyl)-4-methylthiazole: step 1/1. In terms of biological role, thiazole kinase involved in thiamine salvage pathway. This is Hydroxyethylthiazole kinase (THIM) from Zea mays (Maize).